A 485-amino-acid chain; its full sequence is NADH-quinone oxidoreductase subunit N (485 aa).

Helical transmembrane passes span leucine 8–isoleucine 28, phenylalanine 35–valine 55, glycine 71–alanine 91, phenylalanine 105–leucine 125, serine 127–phenylalanine 147, tyrosine 159–alanine 179, leucine 203–phenylalanine 223, proline 235–methionine 255, valine 271–glutamine 291, leucine 297–glutamine 317, valine 326–leucine 346, alanine 373–isoleucine 393, tryptophan 408–valine 430, and isoleucine 455–isoleucine 475.

It belongs to the complex I subunit 2 family. As to quaternary structure, NDH-1 is composed of 13 different subunits. Subunits NuoA, H, J, K, L, M, N constitute the membrane sector of the complex.

The protein localises to the cell inner membrane. The enzyme catalyses a quinone + NADH + 5 H(+)(in) = a quinol + NAD(+) + 4 H(+)(out). In terms of biological role, NDH-1 shuttles electrons from NADH, via FMN and iron-sulfur (Fe-S) centers, to quinones in the respiratory chain. The immediate electron acceptor for the enzyme in this species is believed to be ubiquinone. Couples the redox reaction to proton translocation (for every two electrons transferred, four hydrogen ions are translocated across the cytoplasmic membrane), and thus conserves the redox energy in a proton gradient. This chain is NADH-quinone oxidoreductase subunit N, found in Shigella boydii serotype 18 (strain CDC 3083-94 / BS512).